Reading from the N-terminus, the 647-residue chain is Phosphomethylpyrimidine synthase (647 aa).

Substrate is bound by residues Asn-235, Met-264, Tyr-293, His-329, 349–351, 390–393, and Glu-429; these read SRG and DGLR. His-433 lines the Zn(2+) pocket. Tyr-456 is a binding site for substrate. Residue His-497 participates in Zn(2+) binding. Residues Cys-577, Cys-580, and Cys-585 each contribute to the [4Fe-4S] cluster site. Residues 623–647 form a disordered region; the sequence is KSAEFKASGSELYHPAVSHEEVAEG.

Belongs to the ThiC family. In terms of assembly, homodimer. Requires [4Fe-4S] cluster as cofactor.

It catalyses the reaction 5-amino-1-(5-phospho-beta-D-ribosyl)imidazole + S-adenosyl-L-methionine = 4-amino-2-methyl-5-(phosphooxymethyl)pyrimidine + CO + 5'-deoxyadenosine + formate + L-methionine + 3 H(+). The protein operates within cofactor biosynthesis; thiamine diphosphate biosynthesis. Catalyzes the synthesis of the hydroxymethylpyrimidine phosphate (HMP-P) moiety of thiamine from aminoimidazole ribotide (AIR) in a radical S-adenosyl-L-methionine (SAM)-dependent reaction. The chain is Phosphomethylpyrimidine synthase from Vibrio vulnificus (strain CMCP6).